A 1126-amino-acid chain; its full sequence is NUT family member 1 (1126 aa).

7 disordered regions span residues 1 to 56 (MASD…PVFS), 334 to 367 (IPKK…IPPE), 475 to 515 (EDAQ…QGAA), 537 to 559 (QEQT…SPSS), 664 to 692 (AGML…DDRG), 755 to 810 (ALNS…GPGL), and 932 to 1014 (GEGR…EELS). Positions 30–55 (FAPPPPVPPDQPLWEPSPQPPIPPVF) are enriched in pro residues. Residues 338-353 (AASKTRAPRRRQRKPQ) are compositionally biased toward basic residues. The span at 962–975 (KLTNGQGQGSTSPR) shows a compositional bias: polar residues. The residue at position 973 (Ser-973) is a Phosphoserine. Residues 987-1005 (TPIKEKCTSADRAKRRETE) show a composition bias toward basic and acidic residues. A phosphoserine mark is found at Ser-1022, Ser-1025, and Ser-1027. The segment at 1032-1126 (PLSTRQASGG…SKRKKRRRSQ (95 aa)) is disordered. Gln-1042 carries the N5-methylglutamine modification. The span at 1106 to 1126 (PRKRRRDGFVTSKRKKRRRSQ) shows a compositional bias: basic residues.

This sequence belongs to the NUT family. In terms of processing, methylated at Gln-1042 by N6AMT1. Phosphorylation on Ser-1022, Ser-1025 or Ser-1027 is important for cytoplasmic export.

The protein resides in the cytoplasm. It is found in the nucleus. Plays a role in the regulation of proliferation. Regulates TERT expression by modulating SP1 binding to TERT promoter binding sites. This is NUT family member 1 from Mus musculus (Mouse).